The following is a 310-amino-acid chain: Ribonuclease HIII (310 aa).

The RNase H type-2 domain occupies tyrosine 91 to lysine 307. A divalent metal cation is bound by residues aspartate 97, glutamate 98, and aspartate 202.

This sequence belongs to the RNase HII family. RnhC subfamily. Mn(2+) serves as cofactor. Requires Mg(2+) as cofactor.

It localises to the cytoplasm. The catalysed reaction is Endonucleolytic cleavage to 5'-phosphomonoester.. Functionally, endonuclease that specifically degrades the RNA of RNA-DNA hybrids. The polypeptide is Ribonuclease HIII (Staphylococcus haemolyticus (strain JCSC1435)).